We begin with the raw amino-acid sequence, 443 residues long: UDP-N-acetylmuramate--L-alanine ligase (443 aa).

110-116 provides a ligand contact to ATP; sequence GAHGKTS.

Belongs to the MurCDEF family.

It is found in the cytoplasm. It carries out the reaction UDP-N-acetyl-alpha-D-muramate + L-alanine + ATP = UDP-N-acetyl-alpha-D-muramoyl-L-alanine + ADP + phosphate + H(+). The protein operates within cell wall biogenesis; peptidoglycan biosynthesis. Functionally, cell wall formation. This Streptococcus equi subsp. zooepidemicus (strain H70) protein is UDP-N-acetylmuramate--L-alanine ligase.